The following is a 263-amino-acid chain: Putative TATA-binding protein pB263R (263 aa).

This sequence belongs to the asfivirus B263R family.

Putative TATA-binding protein. The sequence is that of Putative TATA-binding protein pB263R from African swine fever virus (isolate Warthog/Namibia/Wart80/1980) (ASFV).